The following is a 32-amino-acid chain: ATP synthase subunit O, mitochondrial (32 aa).

This sequence belongs to the ATPase delta chain family. F-type ATPases have 2 components, CF(1) - the catalytic core - and CF(0) - the membrane proton channel. CF(1) has five subunits: alpha(3), beta(3), gamma(1), delta(1), epsilon(1). CF(0) has three main subunits: a, b and c.

Its subcellular location is the mitochondrion. It localises to the mitochondrion inner membrane. In terms of biological role, mitochondrial membrane ATP synthase (F(1)F(0) ATP synthase or Complex V) produces ATP from ADP in the presence of a proton gradient across the membrane which is generated by electron transport complexes of the respiratory chain. F-type ATPases consist of two structural domains, F(1) - containing the extramembraneous catalytic core and F(0) - containing the membrane proton channel, linked together by a central stalk and a peripheral stalk. During catalysis, ATP synthesis in the catalytic domain of F(1) is coupled via a rotary mechanism of the central stalk subunits to proton translocation. Part of the complex F(0) domain and the peripheric stalk, which acts as a stator to hold the catalytic alpha(3)beta(3) subcomplex and subunit a/ATP6 static relative to the rotary elements. The chain is ATP synthase subunit O, mitochondrial from Spinacia oleracea (Spinach).